Reading from the N-terminus, the 264-residue chain is MKILQQDDFGYWLLTQGSNLYLVNNELPFGIAKDIDLEGLQAMQIGEWKNHPLWLVAEQESDEREYVSLSHLLSLPEDEFHILSRGVEINHFLKTHKFCGKCGHKTQQTQDELAVQCTHCGYQTYPVICPSIIVAVRRGHEILLANHKRHYSPNGGIYTTLAGFVEVGETFEQAVQREVFEETGISIKNLRYFGSQPWAFPNSQMVGFLADYESGEITLQESEIYDAQWFSYDQPLPELPPTGTIARKLIHATLELCKAEHKCD.

Residues Cys-99 and Cys-102 each coordinate Zn(2+). Glu-112 contributes to the substrate binding site. Zn(2+)-binding residues include Cys-117 and Cys-120. Residue Tyr-125 coordinates substrate. In terms of domain architecture, Nudix hydrolase spans 126–253 (PVICPSIIVA…TIARKLIHAT (128 aa)). Residues Ala-162, Glu-178, and Glu-182 each coordinate a divalent metal cation. Residues 163–184 (GFVEVGETFEQAVQREVFEETG) carry the Nudix box motif. Position 196 to 203 (196 to 203 (QPWAFPNS)) interacts with substrate. Position 223 (Glu-223) interacts with a divalent metal cation. Ala-246 provides a ligand contact to substrate.

Belongs to the Nudix hydrolase family. NudC subfamily. As to quaternary structure, homodimer. Mg(2+) is required as a cofactor. The cofactor is Mn(2+). Zn(2+) serves as cofactor.

It catalyses the reaction a 5'-end NAD(+)-phospho-ribonucleoside in mRNA + H2O = a 5'-end phospho-adenosine-phospho-ribonucleoside in mRNA + beta-nicotinamide D-ribonucleotide + 2 H(+). It carries out the reaction NAD(+) + H2O = beta-nicotinamide D-ribonucleotide + AMP + 2 H(+). The enzyme catalyses NADH + H2O = reduced beta-nicotinamide D-ribonucleotide + AMP + 2 H(+). Its function is as follows. mRNA decapping enzyme that specifically removes the nicotinamide adenine dinucleotide (NAD) cap from a subset of mRNAs by hydrolyzing the diphosphate linkage to produce nicotinamide mononucleotide (NMN) and 5' monophosphate mRNA. The NAD-cap is present at the 5'-end of some mRNAs and stabilizes RNA against 5'-processing. Has preference for mRNAs with a 5'-end purine. Catalyzes the hydrolysis of a broad range of dinucleotide pyrophosphates. The sequence is that of NAD-capped RNA hydrolase NudC from Haemophilus influenzae (strain PittGG).